We begin with the raw amino-acid sequence, 101 residues long: Small ribosomal subunit protein uS14 (101 aa).

This sequence belongs to the universal ribosomal protein uS14 family. Part of the 30S ribosomal subunit. Contacts proteins S3 and S10.

Functionally, binds 16S rRNA, required for the assembly of 30S particles and may also be responsible for determining the conformation of the 16S rRNA at the A site. The sequence is that of Small ribosomal subunit protein uS14 from Rhizobium meliloti (strain 1021) (Ensifer meliloti).